The chain runs to 695 residues: Cysteine-rich receptor-like protein kinase 6 (695 aa).

A signal peptide spans 1 to 31 (MRRHRPYLDGVAAAAATFLLAVLLHAPLAAG). Over 32–294 (EDEPPPWVLC…ATSGEKTKNR (263 aa)) the chain is Extracellular. Gnk2-homologous domains follow at residues 38-142 (WVLC…NRDF) and 151-261 (TTYT…VFPF). 4 N-linked (GlcNAc...) asparagine glycosylation sites follow: Asn49, Asn53, Asn70, and Asn101. 2 cysteine pairs are disulfide-bonded: Cys96–Cys105 and Cys108–Cys133. N-linked (GlcNAc...) asparagine glycosylation is present at Asn178. Disulfide bonds link Cys215/Cys224 and Cys227/Cys252. Residues 295–315 (IGTVLAIVMPAIAAILLMVVA) traverse the membrane as a helical segment. Residues 316-695 (CFCCWKRIKK…DLSITELVPR (380 aa)) lie on the Cytoplasmic side of the membrane. A Protein kinase domain is found at 363-634 (FADTKMIGQG…PTISSVNIML (272 aa)). ATP is bound by residues 369–377 (IGQGGFGMV) and Lys391. Asp488 (proton acceptor) is an active-site residue. The tract at residues 658 to 682 (DSSNPYSERYPRPRHSGYSDNSTVV) is disordered.

It belongs to the protein kinase superfamily. Ser/Thr protein kinase family. CRK subfamily.

Its subcellular location is the membrane. Involved in disease resistance. Required for NPR1/NH1-mediated immunity to the bacterial blight pathogen Xanthomomas oryzae pv. oryzae (Xoo). Required for the benzothiadiazole (BTH)-induced immune response. Possesses kinase activity in vitro. The protein is Cysteine-rich receptor-like protein kinase 6 of Oryza sativa subsp. japonica (Rice).